The primary structure comprises 249 residues: ATP synthase subunit a 1 (249 aa).

Transmembrane regions (helical) follow at residues 26–46 (FTNVSAFMVATVVVASGFLYL), 84–104 (FFPFVFSLFMFVLVANFLGLF), 114–134 (IIVTFALAVLVIGTVIVYGFF), 143–163 (LFVPSGVPGIIVPLVVAIEII), 193–213 (FVVSLAALGPIGIGGAVLPLI), and 216–236 (VAITALEFLVAFLQAYVFTVL).

It belongs to the ATPase A chain family. As to quaternary structure, F-type ATPases have 2 components, CF(1) - the catalytic core - and CF(0) - the membrane proton channel. CF(1) has five subunits: alpha(3), beta(3), gamma(1), delta(1), epsilon(1). CF(0) has three main subunits: a(1), b(2) and c(9-12). The alpha and beta chains form an alternating ring which encloses part of the gamma chain. CF(1) is attached to CF(0) by a central stalk formed by the gamma and epsilon chains, while a peripheral stalk is formed by the delta and b chains.

The protein localises to the cell inner membrane. Functionally, key component of the proton channel; it plays a direct role in the translocation of protons across the membrane. This Brucella anthropi (strain ATCC 49188 / DSM 6882 / CCUG 24695 / JCM 21032 / LMG 3331 / NBRC 15819 / NCTC 12168 / Alc 37) (Ochrobactrum anthropi) protein is ATP synthase subunit a 1.